The primary structure comprises 317 residues: MEELNTIKLSDHLTPFLTFNRQQWAELRKSVPLKLTEQDLKPLLGFNEELSLEEVSTIYLPLARLINYYIEENLRRQTVLKRFLSGHNPKVPYIISIAGSVSVGKSTSARILQSLLANWPVARKVDLITTDGFLYPLEILQKKNLLQKKGFPISYDTQRLIRFLADIKSGKKNVKAPIYSHLTYDIIPNQFDIVDRPDILILEGLNVLQIGTNKSNQMFVSDFVDFSIFVDAEEDQLKEWYIKRFLKFCRSAFTDPNSYFKHYANLSEQEAIETASQIWDNINGLNLKQNILPTRERANLILKKGENHKVELVKLRK.

99–106 (GSVSVGKS) contributes to the ATP binding site.

This sequence belongs to the prokaryotic pantothenate kinase family.

It localises to the cytoplasm. It catalyses the reaction (R)-pantothenate + ATP = (R)-4'-phosphopantothenate + ADP + H(+). It functions in the pathway cofactor biosynthesis; coenzyme A biosynthesis; CoA from (R)-pantothenate: step 1/5. The protein is Pantothenate kinase of Histophilus somni (strain 129Pt) (Haemophilus somnus).